Reading from the N-terminus, the 126-residue chain is Large ribosomal subunit protein bL20 (126 aa).

Belongs to the bacterial ribosomal protein bL20 family.

In terms of biological role, binds directly to 23S ribosomal RNA and is necessary for the in vitro assembly process of the 50S ribosomal subunit. It is not involved in the protein synthesizing functions of that subunit. The protein is Large ribosomal subunit protein bL20 of Nocardia farcinica (strain IFM 10152).